The chain runs to 206 residues: Thymidylate kinase (206 aa).

ATP is bound at residue 11–18; it reads GIDGAGKT.

The protein belongs to the thymidylate kinase family.

The enzyme catalyses dTMP + ATP = dTDP + ADP. In terms of biological role, phosphorylation of dTMP to form dTDP in both de novo and salvage pathways of dTTP synthesis. In Burkholderia vietnamiensis (strain G4 / LMG 22486) (Burkholderia cepacia (strain R1808)), this protein is Thymidylate kinase.